We begin with the raw amino-acid sequence, 229 residues long: Multiple organellar RNA editing factor 5, chloroplastic/mitochondrial (229 aa).

A chloroplast and mitochondrion-targeting transit peptide spans 1–57 (MAKTLARSTASRITKRLISTSGATTPSPSYILSRRSTPVFSHAVGFISSLNRFTTIR).

This sequence belongs to the MORF family. Homodimer and heterodimers with MORF8/RIP1, MORF3/RIP3, MORF6/RIP6, MORF7/RIP7 and MORF9/RIP9.

It localises to the mitochondrion. Its subcellular location is the plastid. The protein localises to the chloroplast. In terms of biological role, involved in organellar RNA editing. Required for the processing of few RNA editing sites in mitochondria. This chain is Multiple organellar RNA editing factor 5, chloroplastic/mitochondrial, found in Arabidopsis thaliana (Mouse-ear cress).